The following is a 175-amino-acid chain: NAD(P)H-quinone oxidoreductase subunit J (175 aa).

This sequence belongs to the complex I 30 kDa subunit family. As to quaternary structure, NDH-1 can be composed of about 15 different subunits; different subcomplexes with different compositions have been identified which probably have different functions.

It is found in the cellular thylakoid membrane. It carries out the reaction a plastoquinone + NADH + (n+1) H(+)(in) = a plastoquinol + NAD(+) + n H(+)(out). The enzyme catalyses a plastoquinone + NADPH + (n+1) H(+)(in) = a plastoquinol + NADP(+) + n H(+)(out). In terms of biological role, NDH-1 shuttles electrons from an unknown electron donor, via FMN and iron-sulfur (Fe-S) centers, to quinones in the respiratory and/or the photosynthetic chain. The immediate electron acceptor for the enzyme in this species is believed to be plastoquinone. Couples the redox reaction to proton translocation, and thus conserves the redox energy in a proton gradient. Cyanobacterial NDH-1 also plays a role in inorganic carbon-concentration. In Trichormus variabilis (strain ATCC 29413 / PCC 7937) (Anabaena variabilis), this protein is NAD(P)H-quinone oxidoreductase subunit J.